We begin with the raw amino-acid sequence, 882 residues long: Putative HTH-type transcriptional regulator Rv0890c (882 aa).

Residues 814–879 (PARGWGSLTP…QLVDEAARRG (66 aa)) form the HTH luxR-type domain. A DNA-binding region (H-T-H motif) is located at residues 838 to 857 (NKDIAKRLFVSPRTVQTHLT).

The chain is Putative HTH-type transcriptional regulator Rv0890c from Mycobacterium tuberculosis (strain ATCC 25618 / H37Rv).